The sequence spans 66 residues: Large ribosomal subunit protein bL35 (66 aa).

The interval 1–22 (MAYKLKSHRGAAKRFKKTASGG) is disordered.

The protein belongs to the bacterial ribosomal protein bL35 family.

The polypeptide is Large ribosomal subunit protein bL35 (Pseudoalteromonas translucida (strain TAC 125)).